We begin with the raw amino-acid sequence, 385 residues long: Cytochrome b (385 aa).

Helical transmembrane passes span 32–52 (FGSL…TLAM), 76–98 (WFIR…AHMG), 113–133 (PWSI…MGYV), and 179–199 (FFAL…LHLI). Heme b is bound by residues His82 and His96. Positions 183 and 197 each coordinate heme b. Position 202 (His202) interacts with a ubiquinone. 4 helical membrane-spanning segments follow: residues 225–245 (YSFK…LFVF), 289–309 (LGGV…PIVD), 321–341 (ISKL…VLGQ), and 348–368 (FIVL…ILLP).

The protein belongs to the cytochrome b family. As to quaternary structure, fungal cytochrome b-c1 complex contains 10 subunits; 3 respiratory subunits, 2 core proteins and 5 low-molecular weight proteins. Cytochrome b-c1 complex is a homodimer. Requires heme b as cofactor.

It localises to the mitochondrion inner membrane. In terms of biological role, component of the ubiquinol-cytochrome c reductase complex (complex III or cytochrome b-c1 complex) that is part of the mitochondrial respiratory chain. The b-c1 complex mediates electron transfer from ubiquinol to cytochrome c. Contributes to the generation of a proton gradient across the mitochondrial membrane that is then used for ATP synthesis. The polypeptide is Cytochrome b (COB) (Yarrowia lipolytica (strain CLIB 122 / E 150) (Yeast)).